Consider the following 802-residue polypeptide: DNA mismatch repair protein MutS (802 aa).

Residue 617–624 (GPNMGGKS) coordinates ATP.

Belongs to the DNA mismatch repair MutS family.

Its function is as follows. This protein is involved in the repair of mismatches in DNA. It is possible that it carries out the mismatch recognition step. This protein has a weak ATPase activity. This Buchnera aphidicola subsp. Acyrthosiphon pisum (strain 5A) protein is DNA mismatch repair protein MutS.